Here is a 198-residue protein sequence, read N- to C-terminus: Ribonuclease HII (198 aa).

An RNase H type-2 domain is found at 11–198; that stretch reads TCIAGVDEVG…APVKRALGLA (188 aa). Positions 17, 18, and 109 each coordinate a divalent metal cation.

This sequence belongs to the RNase HII family. Requires Mn(2+) as cofactor. The cofactor is Mg(2+).

The protein localises to the cytoplasm. It carries out the reaction Endonucleolytic cleavage to 5'-phosphomonoester.. Endonuclease that specifically degrades the RNA of RNA-DNA hybrids. The polypeptide is Ribonuclease HII (Pectobacterium carotovorum subsp. carotovorum (strain PC1)).